The sequence spans 113 residues: Large ribosomal subunit protein bL19 (113 aa).

The protein belongs to the bacterial ribosomal protein bL19 family.

In terms of biological role, this protein is located at the 30S-50S ribosomal subunit interface and may play a role in the structure and function of the aminoacyl-tRNA binding site. This is Large ribosomal subunit protein bL19 from Mycobacteroides abscessus (strain ATCC 19977 / DSM 44196 / CCUG 20993 / CIP 104536 / JCM 13569 / NCTC 13031 / TMC 1543 / L948) (Mycobacterium abscessus).